The following is a 1300-amino-acid chain: Histone-lysine N-methyltransferase Suv4-20 (1300 aa).

Positions 1–136 are disordered; that stretch reads MVVGSNHTRR…GSGSVVSGLN (136 aa). Residues 14 to 62 are compositionally biased toward low complexity; that stretch reads GSRFTNSSSSSSTSGGPTASASSTTSVTSSLATNSTSTSTAAALLSSMS. The span at 79–97 shows a compositional bias: polar residues; it reads QTNQQHHQVAHSQPHATHY. Positions 116–128 are enriched in gly residues; that stretch reads GSGGGSAGSGSGS. In terms of domain architecture, SET spans 255-366; the sequence is EACYRYTLEE…VGEEITCFYG (112 aa). Disordered stretches follow at residues 432–490, 535–574, 669–744, 756–856, and 891–927; these read SRAN…GKEA, QQHH…QQMA, HQSQ…SAGR, NNNI…TQGI, and ALGG…VEPL. Residues 435–451 show a composition bias toward low complexity; it reads NSTNSTSNSNSNTNDST. The span at 452 to 462 shows a compositional bias: polar residues; it reads GPSETSSTNGL. The span at 536–557 shows a compositional bias: basic residues; the sequence is QHHHQHHFHHHHHHHHHHHNHG. Positions 564–574 are enriched in low complexity; sequence AEATAAVQQMA. Composition is skewed to basic and acidic residues over residues 677–688, 698–707, and 722–735; these read RRSERQKEKLTD, QQKKEQKQQD, and QPEK…EQQK. The span at 756 to 821 shows a compositional bias: low complexity; the sequence is NNNIATTTNS…SSIPSSTSSE (66 aa). Composition is skewed to polar residues over residues 822-834 and 911-923; these read NQQQ…SCSP and EPTT…TISN. A phosphoserine mark is found at serine 831 and serine 833. Threonine 930 bears the Phosphothreonine mark. Disordered regions lie at residues 956–988, 1006–1188, 1212–1233, and 1263–1300; these read SLSN…NLTG, EHGN…PNGK, SPGQ…GGSG, and QISQ…HGQK. Residues 1009–1029 show a composition bias toward acidic residues; the sequence is NDDDEDEEEDDEEPAAEEEEE. Basic residues predominate over residues 1041–1055; the sequence is KKQRKKQRSRSRSSQ. Composition is skewed to low complexity over residues 1117–1145 and 1161–1178; these read ASST…STSA and SPSS…TSTT. Positions 1289–1300 are enriched in basic residues; it reads SHHHTNNHHGQK.

Belongs to the class V-like SAM-binding methyltransferase superfamily. Histone-lysine methyltransferase family. Suvar4-20 subfamily.

It localises to the nucleus. It is found in the chromosome. The enzyme catalyses L-lysyl(20)-[histone H4] + S-adenosyl-L-methionine = N(6)-methyl-L-lysyl(20)-[histone H4] + S-adenosyl-L-homocysteine + H(+). It carries out the reaction N(6)-methyl-L-lysyl(20)-[histone H4] + S-adenosyl-L-methionine = N(6),N(6)-dimethyl-L-lysyl(20)-[histone H4] + S-adenosyl-L-homocysteine + H(+). The catalysed reaction is N(6),N(6)-dimethyl-L-lysyl(20)-[histone H4] + S-adenosyl-L-methionine = N(6),N(6),N(6)-trimethyl-L-lysyl(20)-[histone H4] + S-adenosyl-L-homocysteine + H(+). In terms of biological role, histone methyltransferase that specifically trimethylates 'Lys-20' of histone H4. H4 'Lys-20' trimethylation represents a specific tag for epigenetic transcriptional repression. Mainly functions in pericentric heterochromatin regions, thereby playing a central role in the establishment of constitutive heterochromatin in these regions. Acts as a dominant suppressor of position-effect variegation. This chain is Histone-lysine N-methyltransferase Suv4-20 (Hmt4-20), found in Drosophila melanogaster (Fruit fly).